Reading from the N-terminus, the 132-residue chain is Small ribosomal subunit protein uS8 (132 aa).

The protein belongs to the universal ribosomal protein uS8 family. As to quaternary structure, part of the 30S ribosomal subunit. Contacts proteins S5 and S12.

In terms of biological role, one of the primary rRNA binding proteins, it binds directly to 16S rRNA central domain where it helps coordinate assembly of the platform of the 30S subunit. The polypeptide is Small ribosomal subunit protein uS8 (Clavibacter michiganensis subsp. michiganensis (strain NCPPB 382)).